The following is a 70-amino-acid chain: DNA-directed RNA polymerase subunit omega (70 aa).

The protein belongs to the RNA polymerase subunit omega family. As to quaternary structure, the RNAP catalytic core consists of 2 alpha, 1 beta, 1 beta' and 1 omega subunit. When a sigma factor is associated with the core the holoenzyme is formed, which can initiate transcription.

The enzyme catalyses RNA(n) + a ribonucleoside 5'-triphosphate = RNA(n+1) + diphosphate. Its function is as follows. Promotes RNA polymerase assembly. Latches the N- and C-terminal regions of the beta' subunit thereby facilitating its interaction with the beta and alpha subunits. In Thermoanaerobacter sp. (strain X514), this protein is DNA-directed RNA polymerase subunit omega.